We begin with the raw amino-acid sequence, 259 residues long: ATP synthase subunit a (259 aa).

Helical transmembrane passes span 29–49 (TVNIDSMIFSVILGALFIWIF), 90–110 (IAPLALTVFIWVFLMNLMDLI), 134–154 (DVNITMSMALGVFALIIIYSI), 208–228 (LVFILIAGLLPWWSQWLLSVP), and 230–250 (ALFHILVITLQAFIFMVLTIV).

Belongs to the ATPase A chain family. F-type ATPases have 2 components, CF(1) - the catalytic core - and CF(0) - the membrane proton channel. CF(1) has five subunits: alpha(3), beta(3), gamma(1), delta(1), epsilon(1). CF(0) has three main subunits: a(1), b(2) and c(9-12). The alpha and beta chains form an alternating ring which encloses part of the gamma chain. CF(1) is attached to CF(0) by a central stalk formed by the gamma and epsilon chains, while a peripheral stalk is formed by the delta and b chains.

The protein resides in the cell inner membrane. Functionally, key component of the proton channel; it plays a direct role in the translocation of protons across the membrane. The sequence is that of ATP synthase subunit a from Aeromonas salmonicida (strain A449).